The following is a 297-amino-acid chain: Endonuclease G, mitochondrial (297 aa).

Residues Met1–Ala48 constitute a mitochondrion transit peptide. Position 128 is a phosphothreonine; by GSK3-beta (Thr128). His141 functions as the Proton acceptor in the catalytic mechanism. Residue Asn172 coordinates Mg(2+). The segment at Ala286–Ser296 is essential for deoxyribonuclease activity. Residue Ser288 is modified to Phosphoserine; by GSK3-beta.

The protein belongs to the DNA/RNA non-specific endonuclease family. As to quaternary structure, homodimer; disulfide-linked. Homodimerization is essential for enzyme activity. Interacts with YWHAG. It depends on Mg(2+) as a cofactor. GSK3-beta-mediated dual phosphorylations at Thr-128 and Ser-288 is necessary for its interaction with YWHAG and the induction of autophagy.

It localises to the mitochondrion. Its function is as follows. Endonuclease that preferentially catalyzes the cleavage of double-stranded 5-hydroxymethylcytosine (5hmC)-modified DNA. The 5hmC-modified nucleotide does not increase the binding affinity, but instead increases the efficiency of cutting and specifies the site of cleavage for the modified DNAs. Shows significantly higher affinity for four-stranded Holliday junction over duplex and single-stranded DNAs. Promotes conservative recombination when the DNA is 5hmC-modified. Promotes autophagy through the suppression of mTOR by its phosphorylation-mediated interaction with YWHAG and its endonuclease activity-mediated DNA damage response. GSK3-beta mediated phosphorylation of ENDOG enhances its interaction with YWHAG, leading to the release of TSC2 and PIK3C3 from YWHAG resulting in mTOR pathway suppression and autophagy initiation. Promotes cleavage of mtDNA in response to oxidative and nitrosative stress, in turn inducing compensatory mtDNA replication. In Homo sapiens (Human), this protein is Endonuclease G, mitochondrial (ENDOG).